A 583-amino-acid polypeptide reads, in one-letter code: 2-succinyl-5-enolpyruvyl-6-hydroxy-3-cyclohexene-1-carboxylate synthase (583 aa).

It belongs to the TPP enzyme family. MenD subfamily. In terms of assembly, homodimer. Mg(2+) serves as cofactor. The cofactor is Mn(2+). Requires thiamine diphosphate as cofactor.

The catalysed reaction is isochorismate + 2-oxoglutarate + H(+) = 5-enolpyruvoyl-6-hydroxy-2-succinyl-cyclohex-3-ene-1-carboxylate + CO2. It functions in the pathway quinol/quinone metabolism; 1,4-dihydroxy-2-naphthoate biosynthesis; 1,4-dihydroxy-2-naphthoate from chorismate: step 2/7. It participates in quinol/quinone metabolism; menaquinone biosynthesis. Functionally, catalyzes the thiamine diphosphate-dependent decarboxylation of 2-oxoglutarate and the subsequent addition of the resulting succinic semialdehyde-thiamine pyrophosphate anion to isochorismate to yield 2-succinyl-5-enolpyruvyl-6-hydroxy-3-cyclohexene-1-carboxylate (SEPHCHC). The protein is 2-succinyl-5-enolpyruvyl-6-hydroxy-3-cyclohexene-1-carboxylate synthase of Roseiflexus sp. (strain RS-1).